A 201-amino-acid polypeptide reads, in one-letter code: Dephospho-CoA kinase (201 aa).

The 198-residue stretch at 4–201 (SVGLTGNIAS…KYLREAKIKQ (198 aa)) folds into the DPCK domain. Residue 12–17 (ASGKST) participates in ATP binding.

The protein belongs to the CoaE family.

Its subcellular location is the cytoplasm. The enzyme catalyses 3'-dephospho-CoA + ATP = ADP + CoA + H(+). The protein operates within cofactor biosynthesis; coenzyme A biosynthesis; CoA from (R)-pantothenate: step 5/5. Its function is as follows. Catalyzes the phosphorylation of the 3'-hydroxyl group of dephosphocoenzyme A to form coenzyme A. In Legionella pneumophila subsp. pneumophila (strain Philadelphia 1 / ATCC 33152 / DSM 7513), this protein is Dephospho-CoA kinase.